Reading from the N-terminus, the 455-residue chain is Chromosomal replication initiator protein DnaA (455 aa).

Positions 1–75 (MDTNNNIEKE…EILSQNKVGM (75 aa)) are domain I, interacts with DnaA modulators. A domain II region spans residues 75 to 106 (MHLAHSVDVRIEVAPKIQINAQANINYKAIKT). The segment at 107 to 321 (SVKDSYTFEN…GAIIKISVNA (215 aa)) is domain III, AAA+ region. The ATP site is built by Gly151, Gly153, Lys154, and Thr155. The interval 322–455 (NLMNAPIDLN…DKKTAFNSSE (134 aa)) is domain IV, binds dsDNA.

This sequence belongs to the DnaA family. In terms of assembly, oligomerizes as a right-handed, spiral filament on DNA at oriC.

It is found in the cytoplasm. Its function is as follows. Plays an essential role in the initiation and regulation of chromosomal replication. ATP-DnaA binds to the origin of replication (oriC) to initiate formation of the DNA replication initiation complex once per cell cycle. Binds the DnaA box (a 9 base pair repeat at the origin) and separates the double-stranded (ds)DNA. Forms a right-handed helical filament on oriC DNA; dsDNA binds to the exterior of the filament while single-stranded (ss)DNA is stabiized in the filament's interior. The ATP-DnaA-oriC complex binds and stabilizes one strand of the AT-rich DNA unwinding element (DUE), permitting loading of DNA polymerase. After initiation quickly degrades to an ADP-DnaA complex that is not apt for DNA replication. Binds acidic phospholipids. The sequence is that of Chromosomal replication initiator protein DnaA from Helicobacter pylori (strain P12).